The primary structure comprises 254 residues: Alcohol dehydrogenase (254 aa).

Met1 carries the post-translational modification N-acetylmethionine. 10–33 (FVAALGGIGLDTSRELVKRNLKNF) is a binding site for NAD(+). Ser138 lines the substrate pocket. The Proton acceptor role is filled by Tyr151.

It belongs to the short-chain dehydrogenases/reductases (SDR) family. In terms of assembly, homodimer.

It carries out the reaction a primary alcohol + NAD(+) = an aldehyde + NADH + H(+). The catalysed reaction is a secondary alcohol + NAD(+) = a ketone + NADH + H(+). The polypeptide is Alcohol dehydrogenase (Adh) (Drosophila lebanonensis (Fruit fly)).